Consider the following 489-residue polypeptide: Long chain base biosynthesis protein 2a (489 aa).

Residues 2–22 (ITIPYLTAVSTYFSYGLLFAF) form a helical membrane-spanning segment. At K311 the chain carries N6-(pyridoxal phosphate)lysine.

This sequence belongs to the class-II pyridoxal-phosphate-dependent aminotransferase family. Heterodimer with LCB1. Component of the serine palmitoyltransferase (SPT) complex, composed of LCB1 and LCB2 (LCB2a or LCB2b). Pyridoxal 5'-phosphate is required as a cofactor. As to expression, ubiquitous. Detected in leaves, roots, stems, flowers and at a lower level in mature seeds.

Its subcellular location is the endoplasmic reticulum membrane. The enzyme catalyses L-serine + hexadecanoyl-CoA + H(+) = 3-oxosphinganine + CO2 + CoA. It functions in the pathway lipid metabolism; sphingolipid metabolism. Functionally, serine palmitoyltransferase (SPT). The heterodimer formed with LCB1 constitutes the catalytic core. Involved in the regulation of the programmed cell death (PCD) signaling pathway. Plays an important role during male gametogenesis and embryogenesis. This is Long chain base biosynthesis protein 2a (LCB2a) from Arabidopsis thaliana (Mouse-ear cress).